The sequence spans 330 residues: GMP reductase (330 aa).

The active-site Thioimidate intermediate is the Cys180. 209 to 232 lines the NADP(+) pocket; sequence LIADGGIRHNGDIAKSVRFGASMV.

This sequence belongs to the IMPDH/GMPR family. GuaC type 2 subfamily.

It catalyses the reaction IMP + NH4(+) + NADP(+) = GMP + NADPH + 2 H(+). Its function is as follows. Catalyzes the irreversible NADPH-dependent deamination of GMP to IMP. It functions in the conversion of nucleobase, nucleoside and nucleotide derivatives of G to A nucleotides, and in maintaining the intracellular balance of A and G nucleotides. The chain is GMP reductase from Lactobacillus gasseri (strain ATCC 33323 / DSM 20243 / BCRC 14619 / CIP 102991 / JCM 1131 / KCTC 3163 / NCIMB 11718 / NCTC 13722 / AM63).